Here is a 288-residue protein sequence, read N- to C-terminus: Nucleotide-binding protein APP7_0339 (288 aa).

8–15 serves as a coordination point for ATP; that stretch reads GRSGSGKS. 56–59 is a binding site for GTP; it reads DIRN.

This sequence belongs to the RapZ-like family.

Its function is as follows. Displays ATPase and GTPase activities. In Actinobacillus pleuropneumoniae serotype 7 (strain AP76), this protein is Nucleotide-binding protein APP7_0339.